Here is a 474-residue protein sequence, read N- to C-terminus: tRNA-2-methylthio-N(6)-dimethylallyladenosine synthase (474 aa).

Positions 3–120 (KKLHIKTWGC…LPEMINSVRG (118 aa)) constitute an MTTase N-terminal domain. [4Fe-4S] cluster-binding residues include Cys12, Cys49, Cys83, Cys157, Cys161, and Cys164. Positions 143 to 375 (RAEGPTAFVS…QERINQQAMA (233 aa)) constitute a Radical SAM core domain. Positions 378-441 (RRMLGTVQRI…TNSLRGKIVR (64 aa)) constitute a TRAM domain.

Belongs to the methylthiotransferase family. MiaB subfamily. As to quaternary structure, monomer. [4Fe-4S] cluster is required as a cofactor.

The protein localises to the cytoplasm. The enzyme catalyses N(6)-dimethylallyladenosine(37) in tRNA + (sulfur carrier)-SH + AH2 + 2 S-adenosyl-L-methionine = 2-methylsulfanyl-N(6)-dimethylallyladenosine(37) in tRNA + (sulfur carrier)-H + 5'-deoxyadenosine + L-methionine + A + S-adenosyl-L-homocysteine + 2 H(+). Catalyzes the methylthiolation of N6-(dimethylallyl)adenosine (i(6)A), leading to the formation of 2-methylthio-N6-(dimethylallyl)adenosine (ms(2)i(6)A) at position 37 in tRNAs that read codons beginning with uridine. The polypeptide is tRNA-2-methylthio-N(6)-dimethylallyladenosine synthase (Klebsiella pneumoniae subsp. pneumoniae (strain ATCC 700721 / MGH 78578)).